The chain runs to 508 residues: ATP synthase subunit alpha (508 aa).

An ATP-binding site is contributed by 171–178 (GDRQTGKT).

The protein belongs to the ATPase alpha/beta chains family. In terms of assembly, F-type ATPases have 2 components, CF(1) - the catalytic core - and CF(0) - the membrane proton channel. CF(1) has five subunits: alpha(3), beta(3), gamma(1), delta(1), epsilon(1). CF(0) has three main subunits: a(1), b(2) and c(9-12). The alpha and beta chains form an alternating ring which encloses part of the gamma chain. CF(1) is attached to CF(0) by a central stalk formed by the gamma and epsilon chains, while a peripheral stalk is formed by the delta and b chains.

The protein localises to the cell membrane. It carries out the reaction ATP + H2O + 4 H(+)(in) = ADP + phosphate + 5 H(+)(out). In terms of biological role, produces ATP from ADP in the presence of a proton gradient across the membrane. The alpha chain is a regulatory subunit. This Protochlamydia amoebophila (strain UWE25) protein is ATP synthase subunit alpha.